The sequence spans 130 residues: Small ribosomal subunit protein uS9 (130 aa).

It belongs to the universal ribosomal protein uS9 family.

This Nitratidesulfovibrio vulgaris (strain ATCC 29579 / DSM 644 / CCUG 34227 / NCIMB 8303 / VKM B-1760 / Hildenborough) (Desulfovibrio vulgaris) protein is Small ribosomal subunit protein uS9.